Consider the following 61-residue polypeptide: uncharacterized protein (61 aa).

This is an uncharacterized protein from Rickettsia conorii (strain ATCC VR-613 / Malish 7).